Consider the following 161-residue polypeptide: Nucleotide-binding protein lpg1167 (161 aa).

It belongs to the YajQ family.

In terms of biological role, nucleotide-binding protein. The polypeptide is Nucleotide-binding protein lpg1167 (Legionella pneumophila subsp. pneumophila (strain Philadelphia 1 / ATCC 33152 / DSM 7513)).